We begin with the raw amino-acid sequence, 712 residues long: DNA ligase (712 aa).

The segment covering 1 to 22 (MSTQYDSDSSPAASNSGSADPA) has biased composition (low complexity). Residues 1-23 (MSTQYDSDSSPAASNSGSADPAL) form a disordered region. 53–57 (DAEFD) is an NAD(+) binding site. The interval 69-93 (SHPEAVTGPSPTTEVAPSPPESSPF) is disordered. Residues 104–105 (SL) and glutamate 129 contribute to the NAD(+) site. The active-site N6-AMP-lysine intermediate is the lysine 131. Residues arginine 152, glutamate 192, lysine 308, and lysine 332 each contribute to the NAD(+) site. Zn(2+)-binding residues include cysteine 426, cysteine 429, cysteine 445, and cysteine 451. In terms of domain architecture, BRCT spans 624–712 (IQADLLAGLS…GPGKGDAEED (89 aa)).

Belongs to the NAD-dependent DNA ligase family. LigA subfamily. Mg(2+) is required as a cofactor. Mn(2+) serves as cofactor.

The enzyme catalyses NAD(+) + (deoxyribonucleotide)n-3'-hydroxyl + 5'-phospho-(deoxyribonucleotide)m = (deoxyribonucleotide)n+m + AMP + beta-nicotinamide D-nucleotide.. DNA ligase that catalyzes the formation of phosphodiester linkages between 5'-phosphoryl and 3'-hydroxyl groups in double-stranded DNA using NAD as a coenzyme and as the energy source for the reaction. It is essential for DNA replication and repair of damaged DNA. This is DNA ligase from Corynebacterium urealyticum (strain ATCC 43042 / DSM 7109).